Consider the following 416-residue polypeptide: Lipoyl synthase, mitochondrial (416 aa).

The N-terminal 33 residues, 1–33 (MAAASTNRLRLLYTSTRASLPQSTPSILTTRTY), are a transit peptide targeting the mitochondrion. Residues 20–52 (LPQSTPSILTTRTYATTDSSTSATSTPKPRRRT) form a disordered region. Positions 29-46 (TTRTYATTDSSTSATSTP) are enriched in low complexity. Positions 133, 138, 144, 164, 168, 171, and 379 each coordinate [4Fe-4S] cluster. Positions 147–368 (GGDKAAATAT…QRRAEELGFL (222 aa)) constitute a Radical SAM core domain.

The protein belongs to the radical SAM superfamily. Lipoyl synthase family. [4Fe-4S] cluster serves as cofactor.

The protein resides in the mitochondrion. The catalysed reaction is [[Fe-S] cluster scaffold protein carrying a second [4Fe-4S](2+) cluster] + N(6)-octanoyl-L-lysyl-[protein] + 2 oxidized [2Fe-2S]-[ferredoxin] + 2 S-adenosyl-L-methionine + 4 H(+) = [[Fe-S] cluster scaffold protein] + N(6)-[(R)-dihydrolipoyl]-L-lysyl-[protein] + 4 Fe(3+) + 2 hydrogen sulfide + 2 5'-deoxyadenosine + 2 L-methionine + 2 reduced [2Fe-2S]-[ferredoxin]. The protein operates within protein modification; protein lipoylation via endogenous pathway; protein N(6)-(lipoyl)lysine from octanoyl-[acyl-carrier-protein]: step 2/2. Catalyzes the radical-mediated insertion of two sulfur atoms into the C-6 and C-8 positions of the octanoyl moiety bound to the lipoyl domains of lipoate-dependent enzymes, thereby converting the octanoylated domains into lipoylated derivatives. In Aspergillus niger (strain ATCC MYA-4892 / CBS 513.88 / FGSC A1513), this protein is Lipoyl synthase, mitochondrial.